Consider the following 503-residue polypeptide: Protein ERGIC-53-like (503 aa).

Residues 1–25 (MLKTGGLSPSLCLLSLLLALHSAER) form the signal peptide. At 26–439 (SYPPPQRRFE…WLPGFSTCLR (414 aa)) the chain is on the lumenal side. Positions 32–253 (RRFEYKLSFK…DVLSFLTFSL (222 aa)) constitute an L-type lectin-like domain. Cys-177 and Cys-216 are joined by a disulfide. A helical membrane pass occupies residues 440-460 (TSIFLFFLLIQTVGFFCYMNF). The Cytoplasmic segment spans residues 461–503 (RQELDKRLQEYLFTESISLQPALPIPRTIGVLRRQPVSPSMQA).

In terms of tissue distribution, predominantly expressed in the sublingual salivary gland, in the mucous cells of the acini, but not in the serous cells, nor in the duct system (at protein level). Not detected in the submandilar, nor the parotid glands. Expressed in the mucous glands, but not detected in the serous glands (at protein level). Besides the salivary glands, expressed in the Brunner's glands in the duodenum, but no other mucous or serous glands (at protein level).

The protein localises to the endoplasmic reticulum-Golgi intermediate compartment membrane. This chain is Protein ERGIC-53-like (Lman1l), found in Rattus norvegicus (Rat).